A 340-amino-acid polypeptide reads, in one-letter code: Glucokinase (340 aa).

Residue 17–22 (GDIGGT) coordinates ATP.

It belongs to the bacterial glucokinase family.

It is found in the cytoplasm. The catalysed reaction is D-glucose + ATP = D-glucose 6-phosphate + ADP + H(+). This is Glucokinase from Allorhizobium ampelinum (strain ATCC BAA-846 / DSM 112012 / S4) (Agrobacterium vitis (strain S4)).